A 132-amino-acid polypeptide reads, in one-letter code: Small ribosomal subunit protein eS12 (132 aa).

It belongs to the eukaryotic ribosomal protein eS12 family.

The protein resides in the cytoplasm. This Xenopus laevis (African clawed frog) protein is Small ribosomal subunit protein eS12 (rps12).